Here is a 616-residue protein sequence, read N- to C-terminus: Proline--tRNA ligase (616 aa).

The protein belongs to the class-II aminoacyl-tRNA synthetase family. ProS type 1 subfamily. In terms of assembly, homodimer.

It is found in the cytoplasm. The catalysed reaction is tRNA(Pro) + L-proline + ATP = L-prolyl-tRNA(Pro) + AMP + diphosphate. In terms of biological role, catalyzes the attachment of proline to tRNA(Pro) in a two-step reaction: proline is first activated by ATP to form Pro-AMP and then transferred to the acceptor end of tRNA(Pro). As ProRS can inadvertently accommodate and process non-cognate amino acids such as alanine and cysteine, to avoid such errors it has two additional distinct editing activities against alanine. One activity is designated as 'pretransfer' editing and involves the tRNA(Pro)-independent hydrolysis of activated Ala-AMP. The other activity is designated 'posttransfer' editing and involves deacylation of mischarged Ala-tRNA(Pro). The misacylated Cys-tRNA(Pro) is not edited by ProRS. The sequence is that of Proline--tRNA ligase from Lactococcus lactis subsp. lactis (strain IL1403) (Streptococcus lactis).